The primary structure comprises 539 residues: Chaperonin GroEL (539 aa).

ATP-binding positions include 29–32 (TLGP), 86–90 (DGTTT), Gly413, 476–478 (NAA), and Asp492.

This sequence belongs to the chaperonin (HSP60) family. Forms a cylinder of 14 subunits composed of two heptameric rings stacked back-to-back. Interacts with the co-chaperonin GroES.

It is found in the cytoplasm. The enzyme catalyses ATP + H2O + a folded polypeptide = ADP + phosphate + an unfolded polypeptide.. Its function is as follows. Together with its co-chaperonin GroES, plays an essential role in assisting protein folding. The GroEL-GroES system forms a nano-cage that allows encapsulation of the non-native substrate proteins and provides a physical environment optimized to promote and accelerate protein folding. The polypeptide is Chaperonin GroEL (Streptococcus thermophilus (strain CNRZ 1066)).